The chain runs to 364 residues: UDP-N-acetylglucosamine--N-acetylmuramyl-(pentapeptide) pyrophosphoryl-undecaprenol N-acetylglucosamine transferase (364 aa).

UDP-N-acetyl-alpha-D-glucosamine-binding positions include 16–18 (TGG), Asn128, Arg166, Ser195, Ile249, and Gln294.

The protein belongs to the glycosyltransferase 28 family. MurG subfamily.

It localises to the cell inner membrane. The catalysed reaction is di-trans,octa-cis-undecaprenyl diphospho-N-acetyl-alpha-D-muramoyl-L-alanyl-D-glutamyl-meso-2,6-diaminopimeloyl-D-alanyl-D-alanine + UDP-N-acetyl-alpha-D-glucosamine = di-trans,octa-cis-undecaprenyl diphospho-[N-acetyl-alpha-D-glucosaminyl-(1-&gt;4)]-N-acetyl-alpha-D-muramoyl-L-alanyl-D-glutamyl-meso-2,6-diaminopimeloyl-D-alanyl-D-alanine + UDP + H(+). It participates in cell wall biogenesis; peptidoglycan biosynthesis. Its function is as follows. Cell wall formation. Catalyzes the transfer of a GlcNAc subunit on undecaprenyl-pyrophosphoryl-MurNAc-pentapeptide (lipid intermediate I) to form undecaprenyl-pyrophosphoryl-MurNAc-(pentapeptide)GlcNAc (lipid intermediate II). In Chromohalobacter salexigens (strain ATCC BAA-138 / DSM 3043 / CIP 106854 / NCIMB 13768 / 1H11), this protein is UDP-N-acetylglucosamine--N-acetylmuramyl-(pentapeptide) pyrophosphoryl-undecaprenol N-acetylglucosamine transferase.